Here is a 946-residue protein sequence, read N- to C-terminus: Inter-alpha-trypsin inhibitor heavy chain H2 (946 aa).

A signal peptide spans 1–18 (MKRLTCFFICFFLSEVSG). The propeptide occupies 19–54 (FEIPINGLSEFVDYEDLVELAPGKFQLVAENRRYQR). Residues 56 to 185 (LPGESEEMME…KVQFELHYQE (130 aa)) enclose the VIT domain. Ser60 carries the post-translational modification Phosphoserine; by FAM20C. N-linked (GlcNAc...) (complex) asparagine glycosylation occurs at Asn118. Cys261 and Cys264 are disulfide-bonded. Glu282 and Glu283 each carry 4-carboxyglutamate. A VWFA domain is found at 308–468 (PKNILFVIDV…YDFLKRLSNE (161 aa)). A glycan (N-linked (GlcNAc...) asparagine) is linked at Asn445. Ser466 is subject to Phosphoserine; by FAM20C. An intrachain disulfide couples Cys650 to Cys651. The O-glycosylated at three sites stretch occupies residues 665–679 (STPSWANPSPTPVIS). O-linked (GalNAc...) threonine; partial glycosylation occurs at Thr666. Ser673 carries O-linked (GalNAc...) serine glycosylation. O-linked (GalNAc...) threonine glycosylation is found at Thr675 and Thr691. Aspartate 1-(chondroitin 4-sulfate)-ester is present on Asp702. A propeptide spanning residues 703–946 (PHFIIYLPKS…PQLYSFLKRP (244 aa)) is cleaved from the precursor. Ser886 bears the Phosphoserine; by FAM20C mark.

I-alpha-I plasma protease inhibitors are assembled from one or two heavy chains (HC) and one light chain, bikunin. Inter-alpha-inhibitor (I-alpha-I) is composed of ITIH1/HC1, ITIH2/HC2 and bikunin. In terms of processing, heavy chains are linked to bikunin via chondroitin 4-sulfate esterified to the alpha-carboxyl of the C-terminal aspartate after propeptide cleavage. N- and O-glycosylated. O-glycosylated with core 1 or possibly core 8 glycans. Post-translationally, phosphorylated by FAM20C in the extracellular medium. As to expression, plasma.

Its subcellular location is the secreted. In terms of biological role, may act as a carrier of hyaluronan in serum or as a binding protein between hyaluronan and other matrix protein, including those on cell surfaces in tissues to regulate the localization, synthesis and degradation of hyaluronan which are essential to cells undergoing biological processes. This Homo sapiens (Human) protein is Inter-alpha-trypsin inhibitor heavy chain H2 (ITIH2).